The chain runs to 145 residues: Actin-depolymerizing factor 2 (145 aa).

The ADF-H domain occupies 13–145 (GMGVAPDIRD…DLEVLRERAH (133 aa)).

It belongs to the actin-binding proteins ADF family.

Its function is as follows. Actin-depolymerizing protein. Severs actin filaments (F-actin) and binds to actin monomers. This Oryza sativa subsp. japonica (Rice) protein is Actin-depolymerizing factor 2 (ADF2).